A 297-amino-acid polypeptide reads, in one-letter code: Cyclin-dependent kinase 1 (297 aa).

Residues Phe-4–Phe-287 form the Protein kinase domain. Residues Ile-10–Val-18 and Lys-33 contribute to the ATP site. The residue at position 14 (Thr-14) is a Phosphothreonine. Phosphotyrosine is present on Tyr-15. Asp-128 functions as the Proton acceptor in the catalytic mechanism. Tyr-160 carries the phosphotyrosine modification. Residue Thr-161 is modified to Phosphothreonine; by CAK.

Belongs to the protein kinase superfamily. CMGC Ser/Thr protein kinase family. CDC2/CDKX subfamily. As to quaternary structure, forms a stable but non-covalent complex with a regulatory subunit and with a cyclin. Component of the Frs-CycA-Cdk1 complex composed of Cdk1, CycA and Z600.

It localises to the nucleus. It catalyses the reaction L-seryl-[protein] + ATP = O-phospho-L-seryl-[protein] + ADP + H(+). The catalysed reaction is L-threonyl-[protein] + ATP = O-phospho-L-threonyl-[protein] + ADP + H(+). The enzyme catalyses [DNA-directed RNA polymerase] + ATP = phospho-[DNA-directed RNA polymerase] + ADP + H(+). With respect to regulation, phosphorylation at Thr-14 or Tyr-15 inactivates the enzyme, while phosphorylation at Thr-161 activates it. Plays a key role in the control of the eukaryotic cell cycle. Required for entry into S-phase and mitosis. In embryos, promotes the release of Rif1 from chromatin during mid-blastula transition. p34 is a component of the kinase complex that phosphorylates the repetitive C-terminus of RNA polymerase II. This is Cyclin-dependent kinase 1 from Drosophila melanogaster (Fruit fly).